We begin with the raw amino-acid sequence, 345 residues long: MTQSFKTPTQTPLLGLSLAKLTEWVQQQGQPAYRGKQLYQWIYQKGAKSLADITVFSKQWREEISNFPIGRSVIHHRSVAPDATVKYLLKLSDGNIIETVGIPTYKRLTVCVSSQVGCPMACDFCATGKGGFSRNLEAHEIIDQVLTVQEDFERRVSHIVFMGMGEPLLNTKNVLAAVRSLNQDLGIGQRLITISTSGIRDRIRQLAQHKLQVTLAVSLHASNQRLREHLIPSAKFYPLADLISECREYVKITKRRISFEYILLASFNDLPDHARELAKNMRGFQCHVNLIPYNPISEVDYQRPTQEMIKTFANALAEQNIAVSIRYSRGLEANAACGQLRASRV.

Glu98 serves as the catalytic Proton acceptor. One can recognise a Radical SAM core domain in the interval 104–332 (TYKRLTVCVS…VSIRYSRGLE (229 aa)). Cysteines 111 and 337 form a disulfide. Cys118, Cys122, and Cys125 together coordinate [4Fe-4S] cluster. Residues 165–166 (GE), Ser195, 218–220 (SLH), and Asn294 each bind S-adenosyl-L-methionine. Cys337 (S-methylcysteine intermediate) is an active-site residue.

This sequence belongs to the radical SAM superfamily. RlmN family. Requires [4Fe-4S] cluster as cofactor.

The protein resides in the cytoplasm. It carries out the reaction adenosine(2503) in 23S rRNA + 2 reduced [2Fe-2S]-[ferredoxin] + 2 S-adenosyl-L-methionine = 2-methyladenosine(2503) in 23S rRNA + 5'-deoxyadenosine + L-methionine + 2 oxidized [2Fe-2S]-[ferredoxin] + S-adenosyl-L-homocysteine. The enzyme catalyses adenosine(37) in tRNA + 2 reduced [2Fe-2S]-[ferredoxin] + 2 S-adenosyl-L-methionine = 2-methyladenosine(37) in tRNA + 5'-deoxyadenosine + L-methionine + 2 oxidized [2Fe-2S]-[ferredoxin] + S-adenosyl-L-homocysteine. Its function is as follows. Specifically methylates position 2 of adenine 2503 in 23S rRNA and position 2 of adenine 37 in tRNAs. The polypeptide is Probable dual-specificity RNA methyltransferase RlmN (Trichodesmium erythraeum (strain IMS101)).